Consider the following 649-residue polypeptide: MFSIKFKTTEELPEPSPRLIDQVIGQEEAVKIVLSAVKNKRNVILLGDPGVGKSMIVKAVGEILSDFGEFTPYYVIAKPNLKNMERPIVEVIDGEYKEDSKDMPKLDFKAPSSTTLLLIMIGAILLSEYLLKYLPQNYLLAAVTITALIVLIFGFVIILTSIMGASRASMPNNLNPMDLKPVLLYECKKRPLVRASAYNVTRLLGDIKHCPLGGRPPLGTPPHKRIILGAIHEAHRGILYVDEIKTMPLEVQDYILTALQDKQLPISGRNPNSSGATVETNPIPCDFILIMSGNMDDVYNLRAPLLDRIDYKIVLKNKMDNTLENRDKLLQFIVQEIKNNNLNPMTYDGCCEVVRIAQYLAGSKDKLTLRLRLLANIIKMANDVAMGKDVEELLGNFDDKGEYHPETQKDKSNKVYITAEHVRKVFDTGIYSMEKQVALNYIKNFKRYKHIVPNDEPKVGVIYGLAVLGAGGIGDVTKIIVQILESKNPGTHLLNISGDIAKHSITLASALSKKLVAEKKLPLPKKDIDLNNKEIYIQFSQSYSKIDGDSATAAVCLAIISALLDIPLKQDFAITGSLDLSGNVLAIGGVNEKIEAAKRYGFKRVIIPEANMIDVIETEGIEIIPVKTLDEIVPLVFDLDNRGGAERFN.

The Cytoplasmic portion of the chain corresponds to 1 to 114 (MFSIKFKTTE…KLDFKAPSST (114 aa)). Residue 47–54 (GDPGVGKS) participates in ATP binding. A helical transmembrane segment spans residues 115–135 (TLLLIMIGAILLSEYLLKYLP). Topologically, residues 136–138 (QNY) are extracellular. Residues 139–159 (LLAAVTITALIVLIFGFVIIL) traverse the membrane as a helical segment. At 160–649 (TSIMGASRAS…DNRGGAERFN (490 aa)) the chain is on the cytoplasmic side. The 184-residue stretch at 456–639 (EPKVGVIYGL…DEIVPLVFDL (184 aa)) folds into the Lon proteolytic domain. Active-site residues include Ser-550 and Lys-593.

This sequence belongs to the peptidase S16 family. Archaeal LonB subfamily. Homohexamer. Organized in a ring with a central cavity.

The protein localises to the cell membrane. ATP-dependent serine protease that mediates the selective degradation of mutant and abnormal proteins as well as certain short-lived regulatory proteins. Degrades polypeptides processively. In Methanocaldococcus jannaschii (strain ATCC 43067 / DSM 2661 / JAL-1 / JCM 10045 / NBRC 100440) (Methanococcus jannaschii), this protein is Archaeal Lon protease.